A 266-amino-acid chain; its full sequence is Hydroxyethylthiazole kinase (266 aa).

Substrate is bound at residue Met41. The ATP site is built by Arg117 and Ser163. Position 190 (Ala190) interacts with substrate.

Belongs to the Thz kinase family. Mg(2+) is required as a cofactor.

The catalysed reaction is 5-(2-hydroxyethyl)-4-methylthiazole + ATP = 4-methyl-5-(2-phosphooxyethyl)-thiazole + ADP + H(+). Its pathway is cofactor biosynthesis; thiamine diphosphate biosynthesis; 4-methyl-5-(2-phosphoethyl)-thiazole from 5-(2-hydroxyethyl)-4-methylthiazole: step 1/1. Its function is as follows. Catalyzes the phosphorylation of the hydroxyl group of 4-methyl-5-beta-hydroxyethylthiazole (THZ). In Histophilus somni (strain 129Pt) (Haemophilus somnus), this protein is Hydroxyethylthiazole kinase.